A 114-amino-acid polypeptide reads, in one-letter code: MAEKPKRPLSAYMLWLNSARESIKKENPDFKVTEIAKKGGELWRGMKDKSEWEAKAAKMKEEYEKAMKEFERNGGDKSSGASTKKRGKAAEKKKPAKKSKKKDSEDDEEEDESD.

The HMG box DNA-binding region spans 5 to 71 (PKRPLSAYML…EYEKAMKEFE (67 aa)). Positions 69–114 (EFERNGGDKSSGASTKKRGKAAEKKKPAKKSKKKDSEDDEEEDESD) are disordered. The span at 105–114 (EDDEEEDESD) shows a compositional bias: acidic residues.

This sequence belongs to the HMGB family.

It localises to the nucleus. It is found in the chromosome. Functionally, found in condensed chromomeres. Binds preferentially to AT-rich DNA. This chain is Mobility group protein 1A (HMG1A), found in Chironomus tentans (Midge).